A 421-amino-acid chain; its full sequence is C2 calcium-dependent domain-containing protein 4C (421 aa).

Disordered regions lie at residues 13 to 97, 119 to 140, 158 to 228, and 250 to 303; these read RGSG…AKLA, DWLS…SLPS, HTRR…SPFG, and VSQL…TVHV. Over residues 215–228 the composition is skewed to polar residues; that stretch reads ESDTGSSAESSPFG. 3 positions are modified to phosphoserine: S262, S264, and S273. The C2 domain maps to 305–421; sequence PRGSVRLLAE…LPLTSLLPFL (117 aa).

This sequence belongs to the C2CD4 family.

The chain is C2 calcium-dependent domain-containing protein 4C (C2CD4C) from Homo sapiens (Human).